The following is a 5400-amino-acid chain: Midasin (5400 aa).

AAA-ATPase protomer stretches follow at residues 345–571 (MVSL…HGLP), 656–986 (LLEK…AIKA), 1050–1308 (SYVK…EKVV), 1347–1652 (SMRR…VNMA), 1769–2023 (VLRV…VLRI), and 2074–2347 (IRQN…MMGP). ATP-binding positions include 360-367 (GPSGSGKS), 674-681 (GETGTGKT), 1079-1086 (GPTSSGKT), 1369-1376 (GDTGGGKT), 1786-1793 (GSPGVGKT), and 2095-2102 (GPSSSGKT). The linker stretch occupies residues 2435 to 4569 (IYLSSLGVTD…DGVGAKDVSD (2135 aa)). 3 coiled-coil regions span residues 2896 to 2916 (LERL…SEID), 3233 to 3253 (AMKI…LELN), and 3896 to 3916 (MEQL…VLKL). 3 disordered regions span residues 4540–4890 (EEDD…SSSN), 4905–4929 (TLTD…TKVN), and 4990–5069 (QVNT…RMDS). Positions 4576–4612 (QLHGTDKKEEEEKEQDDVLGKNKGIEMSDEFDGKEYS) are enriched in basic and acidic residues. Over residues 4613 to 4631 (VSEDEEEDKEDEGSEDEPL) the composition is skewed to acidic residues. Composition is skewed to basic and acidic residues over residues 4641-4652 (DAEKADEKPWNK) and 4661-4687 (MNEK…KDDG). Composition is skewed to acidic residues over residues 4688–4698 (VETADEPEESN) and 4706–4721 (GNDE…DTDN). Over residues 4722–4732 (LEEKIQTKEEA) the composition is skewed to basic and acidic residues. Positions 4740 to 4750 (VDNEQIDDDME) are enriched in acidic residues. Basic and acidic residues predominate over residues 4751 to 4762 (MDKTEEVEKEDA). Residues 4779-4798 (GENDQEETQEPSEENMEAEA) show a composition bias toward acidic residues. Residues 4799 to 4810 (EDRCGSPQKEEP) are compositionally biased toward basic and acidic residues. The span at 4811–4822 (GNDLEQEPETEP) shows a compositional bias: acidic residues. Positions 4823 to 4834 (IEGKEVMSEDMM) are enriched in basic and acidic residues. 4 stretches are compositionally biased toward polar residues: residues 4839–4855 (RNDN…NPHG), 4864–4874 (TAPQENLSATD), 4916–4928 (PQNQ…QTKV), and 5030–5040 (SKPSISNSIAE). The short motif at 5157-5164 (MKKVIPYI) is the Nuclear localization signal element. Residues 5186–5387 (QVVIAVDDSR…EALPRTLGDV (202 aa)) form the VWFA domain. Residues 5271–5291 (VVNLLRNMNEMLENLASTRRQ) adopt a coiled-coil conformation.

This sequence belongs to the midasin family. In terms of assembly, associates with pre-60S ribosomes in the nucleoplasm. As to expression, constitutively and ubiquitously expressed. Mostly observed in the shoot apex and root tip, and, to a lower extent, in mature seeds, seedling (excluding the hypocotyl), roots, stems, leaves and flowers.

It is found in the nucleus. The protein localises to the nucleolus. Its subcellular location is the nucleoplasm. Nuclear chaperone required for maturation and nuclear export of pre-60S ribosome subunits. Functions at successive maturation steps to remove ribosomal factors at critical transition points, first driving the exit of early pre-60S particles from the nucleolus and then driving late pre-60S particles from the nucleus. Required for female gametophyte development. Involved in the expression regulation of genes related to plant growth and development. The chain is Midasin from Arabidopsis thaliana (Mouse-ear cress).